The sequence spans 212 residues: 3,4-dihydroxy-2-butanone 4-phosphate synthase (212 aa).

D-ribulose 5-phosphate-binding positions include 37–38 (RE), D42, 150–154 (RRGHT), and E174. Mg(2+) is bound at residue E38. Residue H153 participates in Mg(2+) binding.

This sequence belongs to the DHBP synthase family. In terms of assembly, homodimer. Requires Mg(2+) as cofactor. It depends on Mn(2+) as a cofactor.

The enzyme catalyses D-ribulose 5-phosphate = (2S)-2-hydroxy-3-oxobutyl phosphate + formate + H(+). It participates in cofactor biosynthesis; riboflavin biosynthesis; 2-hydroxy-3-oxobutyl phosphate from D-ribulose 5-phosphate: step 1/1. Catalyzes the conversion of D-ribulose 5-phosphate to formate and 3,4-dihydroxy-2-butanone 4-phosphate. The chain is 3,4-dihydroxy-2-butanone 4-phosphate synthase from Shewanella pealeana (strain ATCC 700345 / ANG-SQ1).